Here is a 202-residue protein sequence, read N- to C-terminus: ADP-ribosylation factor-like protein 15 (202 aa).

Residues 39–46, 82–86, and 142–145 each bind GTP; these read GLTGSGKT, ELGGA, and NHQD.

It belongs to the small GTPase superfamily. Arf family.

This chain is ADP-ribosylation factor-like protein 15 (ARL15), found in Bos taurus (Bovine).